We begin with the raw amino-acid sequence, 155 residues long: SsrA-binding protein (155 aa).

The disordered stretch occupies residues 132–155; the sequence is DKREDLKQKQMKRDVDRAIKDHMR.

It belongs to the SmpB family.

The protein resides in the cytoplasm. Functionally, required for rescue of stalled ribosomes mediated by trans-translation. Binds to transfer-messenger RNA (tmRNA), required for stable association of tmRNA with ribosomes. tmRNA and SmpB together mimic tRNA shape, replacing the anticodon stem-loop with SmpB. tmRNA is encoded by the ssrA gene; the 2 termini fold to resemble tRNA(Ala) and it encodes a 'tag peptide', a short internal open reading frame. During trans-translation Ala-aminoacylated tmRNA acts like a tRNA, entering the A-site of stalled ribosomes, displacing the stalled mRNA. The ribosome then switches to translate the ORF on the tmRNA; the nascent peptide is terminated with the 'tag peptide' encoded by the tmRNA and targeted for degradation. The ribosome is freed to recommence translation, which seems to be the essential function of trans-translation. The sequence is that of SsrA-binding protein from Oceanobacillus iheyensis (strain DSM 14371 / CIP 107618 / JCM 11309 / KCTC 3954 / HTE831).